A 126-amino-acid chain; its full sequence is Glycine cleavage system H protein (126 aa).

The region spanning 22–104 (VVFIGITDYA…YGAGWIIKVK (83 aa)) is the Lipoyl-binding domain. Residue K63 is modified to N6-lipoyllysine.

This sequence belongs to the GcvH family. The glycine cleavage system is composed of four proteins: P, T, L and H. (R)-lipoate serves as cofactor.

The glycine cleavage system catalyzes the degradation of glycine. The H protein shuttles the methylamine group of glycine from the P protein to the T protein. The polypeptide is Glycine cleavage system H protein (Porphyromonas gingivalis (strain ATCC 33277 / DSM 20709 / CIP 103683 / JCM 12257 / NCTC 11834 / 2561)).